The primary structure comprises 345 residues: Methionine import ATP-binding protein MetN 4 (345 aa).

The region spanning 2–241 is the ABC transporter domain; sequence IELTNITKTF…PQLRTTKRFV (240 aa). 38–45 lines the ATP pocket; the sequence is GYSGAGKS.

It belongs to the ABC transporter superfamily. Methionine importer (TC 3.A.1.24) family. The complex is composed of two ATP-binding proteins (MetN), two transmembrane proteins (MetI) and a solute-binding protein (MetQ).

The protein localises to the cell membrane. The enzyme catalyses L-methionine(out) + ATP + H2O = L-methionine(in) + ADP + phosphate + H(+). It carries out the reaction D-methionine(out) + ATP + H2O = D-methionine(in) + ADP + phosphate + H(+). Part of the ABC transporter complex MetNIQ involved in methionine import. Responsible for energy coupling to the transport system. This chain is Methionine import ATP-binding protein MetN 4, found in Oceanobacillus iheyensis (strain DSM 14371 / CIP 107618 / JCM 11309 / KCTC 3954 / HTE831).